Consider the following 367-residue polypeptide: Probable 7-methylxanthine methyltransferase 2 (367 aa).

An S-adenosyl-L-homocysteine-binding site is contributed by Y20. T27 is a theobromine binding site. S-adenosyl-L-homocysteine-binding residues include C64, Q69, D101, L102, S134, and F135. Y152, H155, and W156 together coordinate theobromine. Mg(2+)-binding residues include N172, D258, F260, and N261. F313 lines the theobromine pocket.

This sequence belongs to the methyltransferase superfamily. Type-7 methyltransferase family. It depends on Mg(2+) as a cofactor.

It carries out the reaction 7-methylxanthine + S-adenosyl-L-methionine = theobromine + S-adenosyl-L-homocysteine + H(+). Its pathway is alkaloid biosynthesis. Involved in the biosynthesis of theobromine. In Theobroma cacao (Cacao), this protein is Probable 7-methylxanthine methyltransferase 2.